The primary structure comprises 201 residues: Small ribosomal subunit protein uS4c (201 aa).

Positions 20 to 43 (GLTSKRPRAGSDLRNQSRSGKRSQ) are disordered. An S4 RNA-binding domain is found at 89–149 (MRLDNILFRL…NEQKSRALIQ (61 aa)).

This sequence belongs to the universal ribosomal protein uS4 family. As to quaternary structure, part of the 30S ribosomal subunit. Contacts protein S5. The interaction surface between S4 and S5 is involved in control of translational fidelity.

The protein resides in the plastid. It is found in the chloroplast. Functionally, one of the primary rRNA binding proteins, it binds directly to 16S rRNA where it nucleates assembly of the body of the 30S subunit. In terms of biological role, with S5 and S12 plays an important role in translational accuracy. This is Small ribosomal subunit protein uS4c (rps4) from Vitis vinifera (Grape).